Reading from the N-terminus, the 383-residue chain is Probable protein phosphatase 2C 13 (383 aa).

Residues arginine 78–phenylalanine 349 enclose the PPM-type phosphatase domain. 4 residues coordinate Mn(2+): aspartate 121, glycine 122, aspartate 297, and aspartate 340.

This sequence belongs to the PP2C family. The cofactor is Mg(2+). It depends on Mn(2+) as a cofactor.

It catalyses the reaction O-phospho-L-seryl-[protein] + H2O = L-seryl-[protein] + phosphate. It carries out the reaction O-phospho-L-threonyl-[protein] + H2O = L-threonyl-[protein] + phosphate. In Arabidopsis thaliana (Mouse-ear cress), this protein is Probable protein phosphatase 2C 13.